Consider the following 237-residue polypeptide: Uracil-DNA glycosylase (237 aa).

Asp-77 functions as the Proton acceptor in the catalytic mechanism.

Belongs to the uracil-DNA glycosylase (UDG) superfamily. UNG family.

The protein resides in the cytoplasm. It carries out the reaction Hydrolyzes single-stranded DNA or mismatched double-stranded DNA and polynucleotides, releasing free uracil.. Functionally, excises uracil residues from the DNA which can arise as a result of misincorporation of dUMP residues by DNA polymerase or due to deamination of cytosine. The polypeptide is Uracil-DNA glycosylase (Acinetobacter baylyi (strain ATCC 33305 / BD413 / ADP1)).